Here is a 607-residue protein sequence, read N- to C-terminus: Thymidine kinase (607 aa).

Disordered regions lie at residues 1–160 (MAGF…ADST) and 180–215 (DDKS…PSGL). A compositionally biased stretch (basic and acidic residues) spans 17–32 (KCQEDESPENERHENF). 3 stretches are compositionally biased toward polar residues: residues 88–106 (AAVT…TSCP), 148–160 (RKTS…ADST), and 194–203 (RRPSSHSALK). An ATP-binding site is contributed by 291–298 (GAPGVGKT). Residue glutamate 317 is the Proton acceptor of the active site. Glutamine 355 serves as a coordination point for substrate. Arginine 445 is a binding site for ATP. Arginine 451 contacts substrate.

The protein belongs to the herpesviridae thymidine kinase family. As to quaternary structure, homodimer.

It localises to the virion tegument. It is found in the host nucleus. The catalysed reaction is thymidine + ATP = dTMP + ADP + H(+). In terms of biological role, catalyzes the transfer of the gamma-phospho group of ATP to thymidine to generate dTMP in the salvage pathway of pyrimidine synthesis. The dTMP serves as a substrate for DNA polymerase during viral DNA replication. Allows the virus to be reactivated and to grow in non-proliferative cells lacking a high concentration of phosphorylated nucleic acid precursors. The protein is Thymidine kinase of Epstein-Barr virus (strain GD1) (HHV-4).